Here is a 390-residue protein sequence, read N- to C-terminus: F-box/kelch-repeat protein At3g06570 (390 aa).

The 47-residue stretch at 23–69 folds into the F-box domain; the sequence is SASFQSLPDDLILSIVARVPRLYHRTVSLVCKSFRSLLVSPELYKAR. Kelch repeat units lie at residues 140–183, 185–234, and 236–281; these read DIYN…VLDR, IFVV…CRTA, and IDGK…QIHN.

The polypeptide is F-box/kelch-repeat protein At3g06570 (Arabidopsis thaliana (Mouse-ear cress)).